A 219-amino-acid polypeptide reads, in one-letter code: 2-hydroxy-3-keto-5-methylthiopentenyl-1-phosphate phosphatase (219 aa).

It belongs to the HAD-like hydrolase superfamily. MtnX family.

It carries out the reaction 2-hydroxy-5-methylsulfanyl-3-oxopent-1-enyl phosphate + H2O = 1,2-dihydroxy-5-(methylsulfanyl)pent-1-en-3-one + phosphate. It participates in amino-acid biosynthesis; L-methionine biosynthesis via salvage pathway; L-methionine from S-methyl-5-thio-alpha-D-ribose 1-phosphate: step 4/6. Dephosphorylates 2-hydroxy-3-keto-5-methylthiopentenyl-1-phosphate (HK-MTPenyl-1-P) yielding 1,2-dihydroxy-3-keto-5-methylthiopentene (DHK-MTPene). The polypeptide is 2-hydroxy-3-keto-5-methylthiopentenyl-1-phosphate phosphatase (Bacillus cereus (strain ATCC 10987 / NRS 248)).